A 371-amino-acid chain; its full sequence is Probable alcohol acetyltransferase (371 aa).

Active-site charge relay system residues include serine 124 and histidine 295. The disordered stretch occupies residues 325–352; sequence AKALEESPKESYSRPPAHQQPLHKNDFT. Residues 327-336 are compositionally biased toward basic and acidic residues; it reads ALEESPKESY.

This sequence belongs to the AB hydrolase superfamily.

Functionally, probable alcohol acetyltransferase that uses acetyl-CoA to synthesize acetate esters from various alcohols. Not involved in the synthesis of ethyl acetate. The sequence is that of Probable alcohol acetyltransferase (EAT2) from Cyberlindnera fabianii (Yeast).